Reading from the N-terminus, the 172-residue chain is 3-hydroxydecanoyl-[acyl-carrier-protein] dehydratase (172 aa).

The active site involves H71.

It belongs to the thioester dehydratase family. FabA subfamily. In terms of assembly, homodimer.

It localises to the cytoplasm. The enzyme catalyses a (3R)-hydroxyacyl-[ACP] = a (2E)-enoyl-[ACP] + H2O. It catalyses the reaction (3R)-hydroxydecanoyl-[ACP] = (2E)-decenoyl-[ACP] + H2O. The catalysed reaction is (2E)-decenoyl-[ACP] = (3Z)-decenoyl-[ACP]. The protein operates within lipid metabolism; fatty acid biosynthesis. Necessary for the introduction of cis unsaturation into fatty acids. Catalyzes the dehydration of (3R)-3-hydroxydecanoyl-ACP to E-(2)-decenoyl-ACP and then its isomerization to Z-(3)-decenoyl-ACP. Can catalyze the dehydratase reaction for beta-hydroxyacyl-ACPs with saturated chain lengths up to 16:0, being most active on intermediate chain length. In Yersinia pseudotuberculosis serotype O:1b (strain IP 31758), this protein is 3-hydroxydecanoyl-[acyl-carrier-protein] dehydratase.